Here is a 125-residue protein sequence, read N- to C-terminus: MTKPAKKNMKSPGKAIKFLRFDWDKYYRIGRQERWRKPRGIDNAIRLELKGYQPKVKIGYRTDKQIRGLHPSGLRPILVKSVKDLEAFAKGKQDVIIIISSTIGLRKRIELIKKAEELGLKIANR.

This sequence belongs to the eukaryotic ribosomal protein eL32 family.

The sequence is that of Large ribosomal subunit protein eL32 (rpl32e) from Sulfolobus acidocaldarius (strain ATCC 33909 / DSM 639 / JCM 8929 / NBRC 15157 / NCIMB 11770).